The chain runs to 717 residues: uncharacterized protein (717 aa).

Belongs to the asfivirus C717R family.

The protein resides in the virion. This is an uncharacterized protein from African swine fever virus (isolate Tick/Malawi/Lil 20-1/1983) (ASFV).